The sequence spans 138 residues: Nucleoside diphosphate kinase (138 aa).

ATP is bound by residues lysine 9, phenylalanine 57, arginine 85, threonine 91, arginine 102, and asparagine 112. The active-site Pros-phosphohistidine intermediate is the histidine 115.

Belongs to the NDK family. Homotetramer. Mg(2+) is required as a cofactor.

Its subcellular location is the cytoplasm. It carries out the reaction a 2'-deoxyribonucleoside 5'-diphosphate + ATP = a 2'-deoxyribonucleoside 5'-triphosphate + ADP. The enzyme catalyses a ribonucleoside 5'-diphosphate + ATP = a ribonucleoside 5'-triphosphate + ADP. Major role in the synthesis of nucleoside triphosphates other than ATP. The ATP gamma phosphate is transferred to the NDP beta phosphate via a ping-pong mechanism, using a phosphorylated active-site intermediate. This Deinococcus geothermalis (strain DSM 11300 / CIP 105573 / AG-3a) protein is Nucleoside diphosphate kinase.